A 208-amino-acid chain; its full sequence is FMN-dependent NADH:quinone oxidoreductase 1 (208 aa).

Residues Ser10, 15 to 17, and 97 to 100 each bind FMN; these read SES and MWNF.

It belongs to the azoreductase type 1 family. Homodimer. Requires FMN as cofactor.

The enzyme catalyses 2 a quinone + NADH + H(+) = 2 a 1,4-benzosemiquinone + NAD(+). It carries out the reaction N,N-dimethyl-1,4-phenylenediamine + anthranilate + 2 NAD(+) = 2-(4-dimethylaminophenyl)diazenylbenzoate + 2 NADH + 2 H(+). Functionally, quinone reductase that provides resistance to thiol-specific stress caused by electrophilic quinones. Its function is as follows. Also exhibits azoreductase activity. Catalyzes the reductive cleavage of the azo bond in aromatic azo compounds to the corresponding amines. The polypeptide is FMN-dependent NADH:quinone oxidoreductase 1 (Bradyrhizobium diazoefficiens (strain JCM 10833 / BCRC 13528 / IAM 13628 / NBRC 14792 / USDA 110)).